The following is a 143-amino-acid chain: Large ribosomal subunit protein uL16 (143 aa).

This sequence belongs to the universal ribosomal protein uL16 family. Part of the 50S ribosomal subunit.

Its function is as follows. Binds 23S rRNA and is also seen to make contacts with the A and possibly P site tRNAs. The chain is Large ribosomal subunit protein uL16 from Sphingopyxis alaskensis (strain DSM 13593 / LMG 18877 / RB2256) (Sphingomonas alaskensis).